A 117-amino-acid chain; its full sequence is Immunoglobulin kappa variable 1-17 (117 aa).

Positions Met1–Cys22 are cleaved as a signal peptide. Positions Asp23–Cys45 are framework-1. One can recognise an Ig-like domain in the interval Ile24 to Pro117. Cys45 and Cys110 are oxidised to a cystine. Residues Arg46–Gly56 form a complementarity-determining-1 region. Residues Trp57–Tyr71 are framework-2. A complementarity-determining-2 region spans residues Ala72–Ser78. Residues Gly79 to Cys110 form a framework-3 region. A complementarity-determining-3 region spans residues Leu111 to Pro117.

Immunoglobulins are composed of two identical heavy chains and two identical light chains; disulfide-linked.

The protein resides in the secreted. The protein localises to the cell membrane. In terms of biological role, v region of the variable domain of immunoglobulin light chains that participates in the antigen recognition. Immunoglobulins, also known as antibodies, are membrane-bound or secreted glycoproteins produced by B lymphocytes. In the recognition phase of humoral immunity, the membrane-bound immunoglobulins serve as receptors which, upon binding of a specific antigen, trigger the clonal expansion and differentiation of B lymphocytes into immunoglobulins-secreting plasma cells. Secreted immunoglobulins mediate the effector phase of humoral immunity, which results in the elimination of bound antigens. The antigen binding site is formed by the variable domain of one heavy chain, together with that of its associated light chain. Thus, each immunoglobulin has two antigen binding sites with remarkable affinity for a particular antigen. The variable domains are assembled by a process called V-(D)-J rearrangement and can then be subjected to somatic hypermutations which, after exposure to antigen and selection, allow affinity maturation for a particular antigen. The sequence is that of Immunoglobulin kappa variable 1-17 from Homo sapiens (Human).